A 236-amino-acid polypeptide reads, in one-letter code: Putative protein ZBED10P (236 aa).

This Homo sapiens (Human) protein is Putative protein ZBED10P.